Reading from the N-terminus, the 872-residue chain is Paramyosin (872 aa).

Positions 1-31 (MSLYRSPSAALLKSPSQAAFGAPFGSMSVAD) are nonhelical region. A coiled-coil region spans residues 32 to 851 (LGSLTRLEDK…ESSLHLIRAK (820 aa)). Residues 294 to 376 (EITQWKSKFD…ALLERAREQL (83 aa)) are interaction with unc-89. Positions 856 to 866 (VVTGKSSSKIF) are nonhelical region.

The protein belongs to the paramyosin family. Homodimer. May interact with unc-89 (via SH3 domain). In terms of processing, phosphorylated on serine residues in the N-terminal non-helical region. In terms of tissue distribution, expressed in body wall muscles of larvae and adults (at protein level). Expressed in gonadal myoepithelial sheath cells (at protein level).

The protein localises to the cytoplasm. It is found in the myofibril. The protein resides in the sarcomere. It localises to the a band. In terms of biological role, structural component of the muscle thick filaments which is involved in assembly and organization of sarcomere myofilaments. Involved in ovulation. Plays a role in the formation of muscle connections, also called muscle arm extensions, between the body wall and the motor axons in the dorsal and ventral cord. This chain is Paramyosin (unc-15), found in Caenorhabditis elegans.